The primary structure comprises 116 residues: uncharacterized protein (116 aa).

This is an uncharacterized protein from Archaeoglobus fulgidus (strain ATCC 49558 / DSM 4304 / JCM 9628 / NBRC 100126 / VC-16).